Here is a 365-residue protein sequence, read N- to C-terminus: DNA replication and repair protein RecF (365 aa).

Residue 30–37 participates in ATP binding; the sequence is GRNAQGKT.

This sequence belongs to the RecF family.

Its subcellular location is the cytoplasm. Its function is as follows. The RecF protein is involved in DNA metabolism; it is required for DNA replication and normal SOS inducibility. RecF binds preferentially to single-stranded, linear DNA. It also seems to bind ATP. The chain is DNA replication and repair protein RecF from Streptococcus pneumoniae serotype 2 (strain D39 / NCTC 7466).